The following is a 268-amino-acid chain: Receptor expression-enhancing protein 2 (268 aa).

Helical transmembrane passes span 1 to 21 and 35 to 55; these read MVSWIISRMVVLAFGTLYPAY and YVKWMMYWIVFALFTTAETIT. The tract at residues 170–268 is disordered; sequence GDDTHTAATL…TTANNVAESP (99 aa). A compositionally biased stretch (low complexity) spans 180–196; sequence PRAKTATRTVRATPVPA. Positions 199–216 are enriched in basic and acidic residues; that stretch reads ESQHSSRSDDQSDSRTEH. A compositionally biased stretch (low complexity) spans 228-248; that stretch reads RIAITRAAKKPAAAKTEQTTK. Residues 249–258 show a composition bias toward basic residues; it reads TVKKAPKKKP.

The protein belongs to the DP1 family. Interacts with odorant receptor proteins.

It localises to the membrane. May enhance the cell surface expression of odorant receptors. The chain is Receptor expression-enhancing protein 2 (reep2) from Danio rerio (Zebrafish).